A 49-amino-acid polypeptide reads, in one-letter code: Defensin-like protein 1 (49 aa).

4 cysteine pairs are disulfide-bonded: Cys3–Cys49, Cys14–Cys35, Cys20–Cys43, and Cys24–Cys45.

This sequence belongs to the DEFL family.

It is found in the secreted. Functionally, possesses antimicrobial activity sensitive to inorganic cations. Binds specifically to the fungal plasma membrane. Has no inhibitory effect on insect gut alpha-amylase. The chain is Defensin-like protein 1 from Clitoria ternatea (Butterfly pea).